The following is a 466-amino-acid chain: Light-independent protochlorophyllide reductase subunit N (466 aa).

[4Fe-4S] cluster is bound by residues Cys23, Cys48, and Cys108.

The protein belongs to the BchN/ChlN family. As to quaternary structure, protochlorophyllide reductase is composed of three subunits; ChlL, ChlN and ChlB. Forms a heterotetramer of two ChlB and two ChlN subunits. [4Fe-4S] cluster serves as cofactor.

The catalysed reaction is chlorophyllide a + oxidized 2[4Fe-4S]-[ferredoxin] + 2 ADP + 2 phosphate = protochlorophyllide a + reduced 2[4Fe-4S]-[ferredoxin] + 2 ATP + 2 H2O. The protein operates within porphyrin-containing compound metabolism; chlorophyll biosynthesis (light-independent). Its function is as follows. Component of the dark-operative protochlorophyllide reductase (DPOR) that uses Mg-ATP and reduced ferredoxin to reduce ring D of protochlorophyllide (Pchlide) to form chlorophyllide a (Chlide). This reaction is light-independent. The NB-protein (ChlN-ChlB) is the catalytic component of the complex. This Synechococcus elongatus (strain ATCC 33912 / PCC 7942 / FACHB-805) (Anacystis nidulans R2) protein is Light-independent protochlorophyllide reductase subunit N.